The primary structure comprises 500 residues: Aspartyl/glutamyl-tRNA(Asn/Gln) amidotransferase subunit B (500 aa).

The protein belongs to the GatB/GatE family. GatB subfamily. In terms of assembly, heterotrimer of A, B and C subunits.

The enzyme catalyses L-glutamyl-tRNA(Gln) + L-glutamine + ATP + H2O = L-glutaminyl-tRNA(Gln) + L-glutamate + ADP + phosphate + H(+). The catalysed reaction is L-aspartyl-tRNA(Asn) + L-glutamine + ATP + H2O = L-asparaginyl-tRNA(Asn) + L-glutamate + ADP + phosphate + 2 H(+). In terms of biological role, allows the formation of correctly charged Asn-tRNA(Asn) or Gln-tRNA(Gln) through the transamidation of misacylated Asp-tRNA(Asn) or Glu-tRNA(Gln) in organisms which lack either or both of asparaginyl-tRNA or glutaminyl-tRNA synthetases. The reaction takes place in the presence of glutamine and ATP through an activated phospho-Asp-tRNA(Asn) or phospho-Glu-tRNA(Gln). The polypeptide is Aspartyl/glutamyl-tRNA(Asn/Gln) amidotransferase subunit B (Brucella melitensis biotype 2 (strain ATCC 23457)).